Reading from the N-terminus, the 287-residue chain is Pantothenate synthetase (287 aa).

30-37 (MGYLHEGH) provides a ligand contact to ATP. Histidine 37 serves as the catalytic Proton donor. Glutamine 61 contributes to the (R)-pantoate binding site. A beta-alanine-binding site is contributed by glutamine 61. 150–153 (GMKD) is a binding site for ATP. A (R)-pantoate-binding site is contributed by glutamine 156. ATP-binding positions include valine 179 and 187 to 190 (LSSR).

Belongs to the pantothenate synthetase family. Homodimer.

The protein localises to the cytoplasm. It carries out the reaction (R)-pantoate + beta-alanine + ATP = (R)-pantothenate + AMP + diphosphate + H(+). Its pathway is cofactor biosynthesis; (R)-pantothenate biosynthesis; (R)-pantothenate from (R)-pantoate and beta-alanine: step 1/1. Functionally, catalyzes the condensation of pantoate with beta-alanine in an ATP-dependent reaction via a pantoyl-adenylate intermediate. The protein is Pantothenate synthetase of Coprothermobacter proteolyticus (strain ATCC 35245 / DSM 5265 / OCM 4 / BT).